The chain runs to 443 residues: Two-pore potassium channel 2 (443 aa).

At 1–144 (MANDGNGDNN…KTDQQSDSKT (144 aa)) the chain is on the cytoplasmic side. Residues 67 to 109 (SLPIDALSQNPSTSSSATTSFSDSTDLLLPLTEPNKPVRKSKP) are disordered. The segment covering 72-98 (ALSQNPSTSSSATTSFSDSTDLLLPLT) has biased composition (low complexity). A helical membrane pass occupies residues 145-165 (IVNQAVALLVVYLSLGVLIYW). The pore-forming intramembrane region spans 181–200 (DALYFCIVTMCTIGYGDITP). The chain crosses the membrane as a helical span at residues 208–228 (FSIFFVLVGFGFMDILLSGMV). Residues 229 to 274 (TYVLDLQENYMLETARNESLNLNDRDKVRSYIIDVKKGRMRIRLKV) are Cytoplasmic-facing. A helical transmembrane segment spans residues 275-295 (GLALGVVVLCLGFGVLIMHFV). The pore-forming intramembrane region spans 302–321 (DSFYFSVMSVTTVGYGDRAF). Residues 328 to 348 (LLAAMWLLVSTLAVARAILFL) traverse the membrane as a helical segment. The Cytoplasmic portion of the chain corresponds to 349 to 443 (AESRVDKRNR…TKDLPTATSI (95 aa)). EF-hand domains are found at residues 365–400 (LGES…KMDK) and 404–439 (KDIN…DLPT). Residues Asp378, Asp380, Asn382, Cys384, Glu389, Asp417, Ser421, Arg423, and Asp428 each coordinate Ca(2+).

It belongs to the two pore domain potassium channel (TC 1.A.1.7) family. In terms of assembly, homodimer. As to expression, expressed in roots, stems, leaves and flowers.

The protein resides in the vacuole membrane. In terms of biological role, probable voltage-independent potassium-selective tonoplast ion channel. In Arabidopsis thaliana (Mouse-ear cress), this protein is Two-pore potassium channel 2 (TPK2).